A 790-amino-acid polypeptide reads, in one-letter code: Nuclear cap-binding protein subunit 1 (790 aa).

The tract at residues 1–26 is disordered; sequence MSRRRHSDENDGGQPHKRRKTSDANE. The short motif at 3 to 20 is the Nuclear localization signal element; it reads RRRHSDENDGGQPHKRRK. The residue at position 7 (serine 7) is a Phosphoserine; by RPS6KB1. At threonine 21 the chain carries Phosphothreonine; by RPS6KB1. Serine 22 bears the Phosphoserine; by RPS6KB1 mark. The MIF4G domain occupies 28-240; sequence EDHLESLICK…CLWAQIQKLK (213 aa). Serine 201 bears the Phosphoserine mark. Position 204 is an N6-acetyllysine (lysine 204). Residues 643–713 are a coiled coil; that stretch reads STIRKMNKHV…SEQKNLFLVI (71 aa). A Glycyl lysine isopeptide (Lys-Gly) (interchain with G-Cter in SUMO2) cross-link involves residue lysine 684. At lysine 698 the chain carries N6-acetyllysine.

Belongs to the NCBP1 family. In terms of assembly, component of the nuclear cap-binding complex (CBC), a heterodimer composed of NCBP1/CBP80 and NCBP2/CBP20 that interacts with m7GpppG-capped RNA. Found in a U snRNA export complex containing PHAX/RNUXA, NCBP1/CBP80, NCBP2/CBP20, RAN, XPO1 and m7G-capped RNA. Identified in a IGF2BP1-dependent mRNP granule complex containing untranslated mRNAs. Interacts with PHAX/RNUXA, SRRT/ARS2, EIF4G2, IGF2BP1, HNRNPF, HNRNPH1, KIAA0427/CTIF, PARN, DROSHA, UPF1 and ALYREF/THOC4. May interact with EIF4G1; the interaction is however controversial since it is reported by PubMed:11340157, PubMed:15059963 and PubMed:15361857, but is not observed by PubMed:19648179. The large PER complex involved in the repression of transcriptional termination is composed of at least PER2, CDK9, DDX5, DHX9, NCBP1/CBP80 and POLR2A. Component of an alternative nuclear cap-binding complex (CBC) composed of NCBP1/CBP80 and NCBP3. Interacts with METTL3. Interacts with ZFC3H1 in a RNase-insensitive manner. Interacts with MTREX. Interacts with TASOR. Interacts with DHX34; the interaction is RNA-dependent. Interacts with KPNA3. Post-translationally, dephosphorylated at Thr-21 by the PNUTS-PP1 complex during RNA polymerase II transcription pause-release.

It is found in the nucleus. Its subcellular location is the cytoplasm. In terms of biological role, component of the cap-binding complex (CBC), which binds cotranscriptionally to the 5'-cap of pre-mRNAs and is involved in various processes such as pre-mRNA splicing, translation regulation, nonsense-mediated mRNA decay, RNA-mediated gene silencing (RNAi) by microRNAs (miRNAs) and mRNA export. The CBC complex is involved in mRNA export from the nucleus via its interaction with ALYREF/THOC4/ALY, leading to the recruitment of the mRNA export machinery to the 5'-end of mRNA and to mRNA export in a 5' to 3' direction through the nuclear pore. The CBC complex is also involved in mediating U snRNA and intronless mRNAs export from the nucleus. The CBC complex is essential for a pioneer round of mRNA translation, before steady state translation when the CBC complex is replaced by cytoplasmic cap-binding protein eIF4E. The pioneer round of mRNA translation mediated by the CBC complex plays a central role in nonsense-mediated mRNA decay (NMD), NMD only taking place in mRNAs bound to the CBC complex, but not on eIF4E-bound mRNAs. The CBC complex enhances NMD in mRNAs containing at least one exon-junction complex (EJC) via its interaction with UPF1, promoting the interaction between UPF1 and UPF2. The CBC complex is also involved in 'failsafe' NMD, which is independent of the EJC complex, while it does not participate in Staufen-mediated mRNA decay (SMD). During cell proliferation, the CBC complex is also involved in microRNAs (miRNAs) biogenesis via its interaction with SRRT/ARS2 and is required for miRNA-mediated RNA interference. The CBC complex also acts as a negative regulator of PARN, thereby acting as an inhibitor of mRNA deadenylation. In the CBC complex, NCBP1/CBP80 does not bind directly capped RNAs (m7GpppG-capped RNA) but is required to stabilize the movement of the N-terminal loop of NCBP2/CBP20 and lock the CBC into a high affinity cap-binding state with the cap structure. Associates with NCBP3 to form an alternative cap-binding complex (CBC) which plays a key role in mRNA export and is particularly important in cellular stress situations such as virus infections. The conventional CBC with NCBP2 binds both small nuclear RNA (snRNA) and messenger (mRNA) and is involved in their export from the nucleus whereas the alternative CBC with NCBP3 does not bind snRNA and associates only with mRNA thereby playing a role only in mRNA export. NCBP1/CBP80 is required for cell growth and viability. The chain is Nuclear cap-binding protein subunit 1 (NCBP1) from Homo sapiens (Human).